The sequence spans 348 residues: NADH-ubiquinone oxidoreductase chain 2 (348 aa).

10 helical membrane passes run 3 to 23 (PFIL…TFAS), 24 to 44 (SHWL…IPLM), 60 to 80 (FITQ…NAWI), 95 to 115 (ASML…HFWL), 136 to 156 (LAPF…ITFL), 177 to 197 (ILAY…QFNQ), 198 to 218 (QLAL…FMIF), 239 to 259 (LTAI…LSGF), 273 to 293 (DIPL…YFYL), and 325 to 345 (LAIS…TLAL).

Belongs to the complex I subunit 2 family.

It localises to the mitochondrion inner membrane. It catalyses the reaction a ubiquinone + NADH + 5 H(+)(in) = a ubiquinol + NAD(+) + 4 H(+)(out). In terms of biological role, core subunit of the mitochondrial membrane respiratory chain NADH dehydrogenase (Complex I) that is believed to belong to the minimal assembly required for catalysis. Complex I functions in the transfer of electrons from NADH to the respiratory chain. The immediate electron acceptor for the enzyme is believed to be ubiquinone. The sequence is that of NADH-ubiquinone oxidoreductase chain 2 (MT-ND2) from Gadus morhua (Atlantic cod).